Reading from the N-terminus, the 447-residue chain is Acyl-CoA (8-3)-desaturase (447 aa).

Met-1 bears the N-acetylmethionine mark. The Cytoplasmic portion of the chain corresponds to 1-124 (MAPDPVPTPG…FRELRATVER (124 aa)). The region spanning 19–97 (TRYFTWEEVA…MNSLLIGELA (79 aa)) is the Cytochrome b5 heme-binding domain. Residues 125 to 145 (MGLMKANHLFFLVYLLHILLL) traverse the membrane as a helical segment. The Lumenal portion of the chain corresponds to 146–160 (DVAAWLTLWIFGTSL). Residues 161–180 (VPFILCAVLLSTVQAQAGWL) traverse the membrane as a helical segment. The Cytoplasmic segment spans residues 181 to 268 (QHDFGHLSVF…HMPYNHQHKY (88 aa)). The Histidine box-1 motif lies at 182–186 (HDFGH). Positions 219 to 223 (HFQHH) match the Histidine box-2 motif. Residues 269–289 (FFLIGPPALLPLYFQWYIFYF) form a helical membrane-spanning segment. The Lumenal segment spans residues 290-308 (VVQRKKWVDLAWMLSFYAR). Residues 309-329 (IFFTYMPLLGLKGFLGLFFIV) form a helical membrane-spanning segment. Topologically, residues 330 to 447 (RFLESNWFVW…QLWLDAYLHQ (118 aa)) are cytoplasmic. The short motif at 385 to 389 (QIEHH) is the Histidine box-3 element.

Belongs to the fatty acid desaturase type 1 family. As to expression, highly expressed in the adrenal gland, liver, brain, and testis, tissues where lipogenesis and steroidogenesis are active. Expressed in colonic mucosa.

The protein localises to the endoplasmic reticulum membrane. It is found in the mitochondrion. It carries out the reaction (8Z,11Z,14Z)-eicosatrienoyl-CoA + 2 Fe(II)-[cytochrome b5] + O2 + 2 H(+) = (5Z,8Z,11Z,14Z)-eicosatetraenoyl-CoA + 2 Fe(III)-[cytochrome b5] + 2 H2O. The enzyme catalyses (8Z,11Z,14Z,17Z)-eicosatetraenoyl-CoA + 2 Fe(II)-[cytochrome b5] + O2 + 2 H(+) = (5Z,8Z,11Z,14Z,17Z)-eicosapentaenoyl-CoA + 2 Fe(III)-[cytochrome b5] + 2 H2O. It catalyses the reaction (11E)-octadecenoyl-CoA + 2 Fe(II)-[cytochrome b5] + O2 + 2 H(+) = (5Z,11E)-octadecadienoyl-CoA + 2 Fe(III)-[cytochrome b5] + 2 H2O. It participates in lipid metabolism; polyunsaturated fatty acid biosynthesis. In terms of biological role, acts as a front-end fatty acyl-coenzyme A (CoA) desaturase that introduces a cis double bond at carbon 5 located between a preexisting double bond and the carboxyl end of the fatty acyl chain. Involved in biosynthesis of highly unsaturated fatty acids (HUFA) from the essential polyunsaturated fatty acids (PUFA) linoleic acid (LA) (18:2n-6) and alpha-linolenic acid (ALA) (18:3n-3) precursors. Specifically, desaturates dihomo-gamma-linoleoate (DGLA) (20:3n-6) and eicosatetraenoate (ETA) (20:4n-3) to generate arachidonate (AA) (20:4n-6) and eicosapentaenoate (EPA) (20:5n-3), respectively. As a rate limiting enzyme for DGLA (20:3n-6) and AA (20:4n-6)-derived eicosanoid biosynthesis, controls the metabolism of inflammatory lipids like prostaglandin E2, critical for efficient acute inflammatory response and maintenance of epithelium homeostasis. Contributes to membrane phospholipid biosynthesis by providing AA (20:4n-6) as a major acyl chain esterified into phospholipids. In particular, regulates phosphatidylinositol-4,5-bisphosphate levels, modulating inflammatory cytokine production in T-cells. Also desaturates (11E)-octadecenoate (trans-vaccenoate)(18:1n-9), a metabolite in the biohydrogenation pathway of LA (18:2n-6). This is Acyl-CoA (8-3)-desaturase from Mus musculus (Mouse).